We begin with the raw amino-acid sequence, 267 residues long: Cilia- and flagella-associated protein 300 (267 aa).

Belongs to the CFAP300 family. In terms of assembly, interacts with DNAAF2.

It localises to the cytoplasm. The protein localises to the cytoskeleton. Its subcellular location is the cilium axoneme. Functionally, cilium- and flagellum-specific protein that plays a role in axonemal structure organization and motility. May play a role in outer and inner dynein arm assembly. This Bos taurus (Bovine) protein is Cilia- and flagella-associated protein 300.